A 365-amino-acid chain; its full sequence is Histidinol-phosphate aminotransferase (365 aa).

The disordered stretch occupies residues 1–22 (MSRPVPNPGILDIAPYTPGKSP). Position 221 is an N6-(pyridoxal phosphate)lysine (Lys-221).

It belongs to the class-II pyridoxal-phosphate-dependent aminotransferase family. Histidinol-phosphate aminotransferase subfamily. In terms of assembly, homodimer. Requires pyridoxal 5'-phosphate as cofactor.

The enzyme catalyses L-histidinol phosphate + 2-oxoglutarate = 3-(imidazol-4-yl)-2-oxopropyl phosphate + L-glutamate. Its pathway is amino-acid biosynthesis; L-histidine biosynthesis; L-histidine from 5-phospho-alpha-D-ribose 1-diphosphate: step 7/9. In Rhodopseudomonas palustris (strain BisB5), this protein is Histidinol-phosphate aminotransferase.